The following is a 326-amino-acid chain: Holliday junction branch migration complex subunit RuvB (326 aa).

The large ATPase domain (RuvB-L) stretch occupies residues 1-180 (MRSISCSKEY…FGIPLRLEFY (180 aa)). ATP is bound by residues I19, R20, G61, K64, T65, T66, 127-129 (EDF), R170, Y180, and R217. Mg(2+) is bound at residue T65. Positions 181–251 (SFEELVDIIK…IADSALSKLG (71 aa)) are small ATPAse domain (RuvB-S). The interval 254–326 (KMGLNKLDVD…QGKEYLSLQY (73 aa)) is head domain (RuvB-H). The DNA site is built by R307 and R312.

The protein belongs to the RuvB family. Homohexamer. Forms an RuvA(8)-RuvB(12)-Holliday junction (HJ) complex. HJ DNA is sandwiched between 2 RuvA tetramers; dsDNA enters through RuvA and exits via RuvB. An RuvB hexamer assembles on each DNA strand where it exits the tetramer. Each RuvB hexamer is contacted by two RuvA subunits (via domain III) on 2 adjacent RuvB subunits; this complex drives branch migration. In the full resolvosome a probable DNA-RuvA(4)-RuvB(12)-RuvC(2) complex forms which resolves the HJ.

Its subcellular location is the cytoplasm. The enzyme catalyses ATP + H2O = ADP + phosphate + H(+). Functionally, the RuvA-RuvB-RuvC complex processes Holliday junction (HJ) DNA during genetic recombination and DNA repair, while the RuvA-RuvB complex plays an important role in the rescue of blocked DNA replication forks via replication fork reversal (RFR). RuvA specifically binds to HJ cruciform DNA, conferring on it an open structure. The RuvB hexamer acts as an ATP-dependent pump, pulling dsDNA into and through the RuvAB complex. RuvB forms 2 homohexamers on either side of HJ DNA bound by 1 or 2 RuvA tetramers; 4 subunits per hexamer contact DNA at a time. Coordinated motions by a converter formed by DNA-disengaged RuvB subunits stimulates ATP hydrolysis and nucleotide exchange. Immobilization of the converter enables RuvB to convert the ATP-contained energy into a lever motion, pulling 2 nucleotides of DNA out of the RuvA tetramer per ATP hydrolyzed, thus driving DNA branch migration. The RuvB motors rotate together with the DNA substrate, which together with the progressing nucleotide cycle form the mechanistic basis for DNA recombination by continuous HJ branch migration. Branch migration allows RuvC to scan DNA until it finds its consensus sequence, where it cleaves and resolves cruciform DNA. In Wolbachia sp. subsp. Brugia malayi (strain TRS), this protein is Holliday junction branch migration complex subunit RuvB.